We begin with the raw amino-acid sequence, 413 residues long: MFGRPKKSDNTKYYEILGVSKNASQDDLKKAYRKAAIKNHPDKGGDPEKFKELAQAYEVLSDPEKREIYDQYGEDALKEGMGGGGGHDPFDIFQSFFGGSPFGGGGSSRGRRQRRGEDVIHPLKVSLEDLYNGTSKKLSLSRNVICSKCKGKGSKSGASMKCPGCQGSGMKVSIRHLGPSMIQQMQHPCNECKGTGETINDKDRCSQCKGEKVVQEKKVLEVIVEKGMQNAQKITFPGEADEAPDTVTGDIVFVLQQKEHPKFKRKGDDLFVEHTLSLVESLCGFQFILTHLDGRQLLIKSLPGEVVKPDQFKAINDEGMPMYQRPFMKGKLYIHFSVEFPDSLNPEQCKALEGVLPPRTSVQLSDMELDECEETTLHDVNIEEEMRRKQAQEAYDEDEDMHGGAQRVQCAQQ.

Residues 10–75 form the J domain; that stretch reads NTKYYEILGV…REIYDQYGED (66 aa). The segment at 133 to 217 adopts a CR-type zinc-finger fold; that stretch reads GTSKKLSLSR…CKGEKVVQEK (85 aa). CXXCXGXG motif repeat units follow at residues 146 to 153, 162 to 169, 189 to 196, and 205 to 212; these read CSKCKGKG, CPGCQGSG, CNECKGTG, and CSQCKGEK. Residues 387-413 form a disordered region; that stretch reads RRKQAQEAYDEDEDMHGGAQRVQCAQQ. Cys-410 is modified (cysteine methyl ester). Cys-410 carries the S-farnesyl cysteine lipid modification. A propeptide spans 411 to 413 (removed in mature form); it reads AQQ.

As to expression, expressed in seedlings in all tissues, but exceedingly high levels in hypocotyledons and roots.

Its subcellular location is the cell membrane. Its function is as follows. Plays a continuous role in plant development probably in the structural organization of compartments. The protein is DnaJ protein homolog (DNAJ1) of Cucumis sativus (Cucumber).